Here is an 89-residue protein sequence, read N- to C-terminus: Small ribosomal subunit protein uS15 (89 aa).

Over residues 1 to 10 (MSITAERKAE) the composition is skewed to basic and acidic residues. Positions 1 to 24 (MSITAERKAEVIQGNANKAGDTGS) are disordered.

It belongs to the universal ribosomal protein uS15 family. As to quaternary structure, part of the 30S ribosomal subunit. Forms a bridge to the 50S subunit in the 70S ribosome, contacting the 23S rRNA.

One of the primary rRNA binding proteins, it binds directly to 16S rRNA where it helps nucleate assembly of the platform of the 30S subunit by binding and bridging several RNA helices of the 16S rRNA. In terms of biological role, forms an intersubunit bridge (bridge B4) with the 23S rRNA of the 50S subunit in the ribosome. The sequence is that of Small ribosomal subunit protein uS15 from Rhodopseudomonas palustris (strain BisB5).